The sequence spans 524 residues: Na(+)/H(+) antiporter NhaB (524 aa).

A run of 13 helical transmembrane segments spans residues 23–43 (LAII…SPFV), 45–65 (GWML…CYPL), 98–118 (LLLI…LFIF), 136–156 (CVAS…AVVI), 203–223 (LMMH…VGEP), 239–259 (FFMR…LVCI), 304–324 (ALIG…VGLV), 325–345 (GLSV…HALG), 358–378 (LTVF…TPII), 392–412 (LFYL…VGTV), 420–440 (AFEL…AINT), 448–468 (ATPN…APLI), and 479–499 (ALPY…YLLV).

This sequence belongs to the NhaB Na(+)/H(+) (TC 2.A.34) antiporter family.

It localises to the cell inner membrane. It catalyses the reaction 2 Na(+)(in) + 3 H(+)(out) = 2 Na(+)(out) + 3 H(+)(in). Its function is as follows. Na(+)/H(+) antiporter that extrudes sodium in exchange for external protons. In Yersinia enterocolitica serotype O:8 / biotype 1B (strain NCTC 13174 / 8081), this protein is Na(+)/H(+) antiporter NhaB.